A 985-amino-acid chain; its full sequence is Probable oxidoreductase YjgC (985 aa).

In terms of domain architecture, 2Fe-2S ferredoxin-type spans 3 to 79; the sequence is GKKTITINGV…GDVIDTLSPD (77 aa). Cys37, Cys48, Cys51, and Cys63 together coordinate [2Fe-2S] cluster. The region spanning 79 to 119 is the 4Fe-4S His(Cys)3-ligated-type domain; that stretch reads DVKKAQVIGMDKILYNHELYCTVCDYNNGGCEIHNTVKEMK. Residues His95, Cys99, Cys102, Cys109, Cys148, Cys151, Cys154, Cys158, Cys191, Cys194, Cys197, Cys201, Cys265, Cys268, Cys272, and Cys300 each contribute to the [4Fe-4S] cluster site. 4Fe-4S ferredoxin-type domains follow at residues 139–170 and 182–211; these read PFYR…LTID and NDVP…EKGM. A 4Fe-4S Mo/W bis-MGD-type domain is found at 258–314; sequence IKKTKTVCTYCGVGCSFDVWTKGRDILKVEPQEEAPANGISTCVKGKFGWDFVNSEE.

The protein in the C-terminal section; belongs to the prokaryotic molybdopterin-containing oxidoreductase family. It depends on [2Fe-2S] cluster as a cofactor. [4Fe-4S] cluster is required as a cofactor. The cofactor is Mo-bis(molybdopterin guanine dinucleotide).

This Bacillus subtilis (strain 168) protein is Probable oxidoreductase YjgC (yjgC).